The following is a 28-amino-acid chain: Trypsin inhibitor 4 (28 aa).

Disulfide bonds link Cys-2-Cys-19, Cys-9-Cys-21, and Cys-15-Cys-27.

The protein belongs to the protease inhibitor I7 (squash-type serine protease inhibitor) family.

The protein resides in the secreted. Its function is as follows. Inhibits trypsin. In Luffa aegyptiaca (Sponge gourd), this protein is Trypsin inhibitor 4.